Here is a 359-residue protein sequence, read N- to C-terminus: MAAELAMGAELPSSPLAIEYVNDFDLMKFEVKKEPPEAERFCHRLPPGSLSSTPLSTPCSSVPSSPSFCAPSPGTGGGAGGGGSAAQAGGAPGPPSGGPGTVGGASGKAVLEDLYWMSGYQHHLNPEALNLTPEDAVEALIGSGHHGAHHGAHHPAAAAAYEAFRGQSFAGGGGADDMGAGHHHGAHHTAHHHHSAHHHHHHHHHHGGSGHHGGGAGHGGGGAGHHVRLEERFSDDQLVSMSVRELNRQLRGFSKEEVIRLKQKRRTLKNRGYAQSCRFKRVQQRHILESEKCQLQSQVEQLKLEVGRLAKERDLYKEKYEKLAGRGGPGGAGGAGFPREPSPAQAGPGAAKGAPDFFL.

Residue Ser14 is modified to Phosphoserine. Residue Lys32 forms a Glycyl lysine isopeptide (Lys-Gly) (interchain with G-Cter in SUMO2) linkage. Disordered regions lie at residues 40-105 (RFCH…VGGA) and 172-226 (GGGA…AGHH). Over residues 46-73 (PPGSLSSTPLSTPCSSVPSSPSFCAPSP) the composition is skewed to low complexity. Phosphoserine is present on Ser49. Phosphothreonine is present on residues Thr53 and Thr57. Residues Ser61 and Ser65 each carry the phosphoserine modification. Residues 74–84 (GTGGGAGGGGS) are compositionally biased toward gly residues. Residues 181 to 209 (GHHHGAHHTAHHHHSAHHHHHHHHHHGGS) are compositionally biased toward basic residues. Over residues 210 to 224 (GHHGGGAGHGGGGAG) the composition is skewed to gly residues. Positions 260 to 285 (RLKQKRRTLKNRGYAQSCRFKRVQQR) are basic motif. A bZIP domain is found at 260–323 (RLKQKRRTLK…DLYKEKYEKL (64 aa)). The tract at residues 288–309 (LESEKCQLQSQVEQLKLEVGRL) is leucine-zipper. The tract at residues 322 to 359 (KLAGRGGPGGAGGAGFPREPSPAQAGPGAAKGAPDFFL) is disordered. The span at 325-336 (GRGGPGGAGGAG) shows a compositional bias: gly residues. Residues 343 to 359 (PAQAGPGAAKGAPDFFL) show a composition bias toward low complexity.

It belongs to the bZIP family. Maf subfamily. In terms of assembly, forms homodimers. Interacts with NEUROD1 and PDX1. May interact with MAFB, FOS, JUN and PCAF. Ubiquitinated, leading to its degradation by the proteasome. In terms of processing, phosphorylated at tyrosines. Expressed in brain, lung, spleen, pancreas and kidney. In the pancreas, expressed in the insulin-producing beta-cells of the islets of Langerhans (at protein level). Also expressed in the eye.

It localises to the nucleus. In terms of biological role, transcriptional factor that activates insulin gene expression. Acts synergistically with NEUROD1/BETA2 and PDX1. Binds the insulin enhancer C1/RIPE3b element. Binds to consensus TRE-type MARE 5'-TGCTGACTCAGCA-3' DNA sequence. The polypeptide is Transcription factor MafA (Mafa) (Mus musculus (Mouse)).